Reading from the N-terminus, the 309-residue chain is MILGTRGSALAIAQADLVTKMLEEKGHELTRNVIKTSGDVFTDRPLHEVAGVGVFVRELDDRMIEGEVDIAVHSMKDLPTVRPPELAIAAVLKRDSPYDVLLTADGSTLDELPDGAIIGTTSMRRRAQLLRYRPDLNVEDLRGNINTRIQKLKAGQYDGILLAEAGLQRMGWDMDVQRLPAEAFCPSANQGTIVVVTRADDEAERACSVLNHERSRMETEVERLLITDVEGGCIVPIGSFAQMNEDGDEIHVLVEVLAVDGTREIRIEDDIPVKNYREHALSIGRMLVEMGGKELVQEAVCEMSGCDDE.

Residue Cys233 is modified to S-(dipyrrolylmethanemethyl)cysteine.

This sequence belongs to the HMBS family. Dipyrromethane is required as a cofactor.

It catalyses the reaction 4 porphobilinogen + H2O = hydroxymethylbilane + 4 NH4(+). It participates in porphyrin-containing compound metabolism; protoporphyrin-IX biosynthesis; coproporphyrinogen-III from 5-aminolevulinate: step 2/4. In terms of biological role, tetrapolymerization of the monopyrrole PBG into the hydroxymethylbilane pre-uroporphyrinogen in several discrete steps. This chain is Probable porphobilinogen deaminase, found in Methanococcoides burtonii (strain DSM 6242 / NBRC 107633 / OCM 468 / ACE-M).